The chain runs to 1442 residues: ABC transporter G family member 35 (1442 aa).

The ABC transporter 1 domain occupies 169–442; it reads LGMIGIRLAK…FESFGFKCPE (274 aa). 202-209 serves as a coordination point for ATP; sequence GPPSSGKT. The ABC transmembrane type-2 1 domain maps to 520–733; sequence ELLKSCWDKE…AFNAITVNEL (214 aa). Transmembrane regions (helical) follow at residues 538–558, 573–593, 619–639, 657–677, 683–703, 714–734, and 769–789; these read FFYVFKTVQIIIIAAITSTLY, IYVGSLLFAMIVNMFNGLAEM, LPTFLLGIPISIFESTAWMVV, FLIIFLIQQMAAGIFRFIAST, IANTGGVLVLLVVFLTGGFLL, WAYWISPLSYAFNAITVNELF, and IGVGGLLGFTVIFNGFFTLAL. Residues 840–1092 form the ABC transporter 2 domain; it reads MSFDDVKYFV…KVVEYFESFP (253 aa). 885 to 892 contacts ATP; the sequence is GVSGAGKT. The region spanning 1165–1379 is the ABC transmembrane type-2 2 domain; the sequence is GQFKSCLWKQ…TIYGLITSQY (215 aa). Helical transmembrane passes span 1186-1206, 1218-1238, 1272-1292, 1299-1319, 1329-1349, 1357-1377, and 1414-1434; these read LVRFIFTLATSLMIGSVFWQI, MVIGAIYAAVVFVGINNCSTV, LPYVLIQTTYYSLIIYSMVGF, FLWFIFINYFSFLYWTYYGMM, VASIFASAFYGIFNLFSGFFI, WWVWYYWICPVAWTIYGLITS, and PVAGVLVGFTVFFAFIFAFCI.

Belongs to the ABC transporter superfamily. ABCG family. PDR (TC 3.A.1.205) subfamily. As to expression, ubiquitous with higher levels in roots.

It localises to the membrane. May be a general defense protein. This is ABC transporter G family member 35 (ABCG35) from Arabidopsis thaliana (Mouse-ear cress).